Consider the following 407-residue polypeptide: Phosphopentomutase (407 aa).

The Mn(2+) site is built by D10, D306, H311, D347, H348, and H359.

It belongs to the phosphopentomutase family. Requires Mn(2+) as cofactor.

The protein resides in the cytoplasm. The catalysed reaction is 2-deoxy-alpha-D-ribose 1-phosphate = 2-deoxy-D-ribose 5-phosphate. The enzyme catalyses alpha-D-ribose 1-phosphate = D-ribose 5-phosphate. The protein operates within carbohydrate degradation; 2-deoxy-D-ribose 1-phosphate degradation; D-glyceraldehyde 3-phosphate and acetaldehyde from 2-deoxy-alpha-D-ribose 1-phosphate: step 1/2. Functionally, isomerase that catalyzes the conversion of deoxy-ribose 1-phosphate (dRib-1-P) and ribose 1-phosphate (Rib-1-P) to deoxy-ribose 5-phosphate (dRib-5-P) and ribose 5-phosphate (Rib-5-P), respectively. In Salmonella gallinarum (strain 287/91 / NCTC 13346), this protein is Phosphopentomutase.